Here is a 200-residue protein sequence, read N- to C-terminus: Dephospho-CoA kinase (200 aa).

The DPCK domain maps to 4 to 200 (VIGLTGGIAS…AILKKWNIID (197 aa)). 12–17 (ASGKST) is a binding site for ATP.

Belongs to the CoaE family.

It is found in the cytoplasm. The catalysed reaction is 3'-dephospho-CoA + ATP = ADP + CoA + H(+). It participates in cofactor biosynthesis; coenzyme A biosynthesis; CoA from (R)-pantothenate: step 5/5. In terms of biological role, catalyzes the phosphorylation of the 3'-hydroxyl group of dephosphocoenzyme A to form coenzyme A. The sequence is that of Dephospho-CoA kinase from Bacillus thuringiensis subsp. konkukian (strain 97-27).